The following is a 563-amino-acid chain: Probable Xaa-Pro aminopeptidase PEPP (563 aa).

The Mn(2+) site is built by Asp-331, Asp-342, Glu-491, and Glu-532.

This sequence belongs to the peptidase M24B family. Mn(2+) is required as a cofactor.

It catalyses the reaction Release of any N-terminal amino acid, including proline, that is linked to proline, even from a dipeptide or tripeptide.. Catalyzes the removal of a penultimate prolyl residue from the N-termini of peptides. The polypeptide is Probable Xaa-Pro aminopeptidase PEPP (PEPP) (Verticillium alfalfae (strain VaMs.102 / ATCC MYA-4576 / FGSC 10136) (Verticillium wilt of alfalfa)).